A 361-amino-acid polypeptide reads, in one-letter code: WAT1-related protein At4g01450 (361 aa).

The next 10 membrane-spanning stretches (helical) occupy residues 8–28 (WAPMIVLIVSNMIAGMVNALV), 40–60 (VIATYRLGISTLFLLPVAYFW), 76–96 (LFVSALFGASLMQYFYLLGLS), 103–123 (GSAFWAIMPSLTFVMALIFGF), 132–152 (IGYGVVLGTLISLVGGLLLTM), 177–197 (WIKGCFFLLTGVVLFSSWMLI), 209–229 (YSSTVILSVFGTLQCALLSLI), 243–263 (LTIITVVIAGVVAQGMCTVGM), 273–293 (VVSSSFSPVVLMSATVFDFLI), and 298–318 (IYLGSVIGSVVVVIGLYIFLW). 2 consecutive EamA domains span residues 21–142 (AGMV…GTLI) and 194–317 (WMLI…YIFL).

It belongs to the drug/metabolite transporter (DMT) superfamily. Plant drug/metabolite exporter (P-DME) (TC 2.A.7.4) family.

It localises to the membrane. The chain is WAT1-related protein At4g01450 from Arabidopsis thaliana (Mouse-ear cress).